Here is a 353-residue protein sequence, read N- to C-terminus: 4-hydroxy-2-oxovalerate aldolase 2 (353 aa).

The Pyruvate carboxyltransferase domain occupies 14-266; the sequence is VRMTDTSLRD…KTGIDFFDIA (253 aa). 22–23 lines the substrate pocket; sequence RD. A Mn(2+)-binding site is contributed by Asp-23. His-26 serves as the catalytic Proton acceptor. Ser-176 and His-205 together coordinate substrate. The Mn(2+) site is built by His-205 and His-207. Tyr-296 serves as a coordination point for substrate.

It belongs to the 4-hydroxy-2-oxovalerate aldolase family.

The catalysed reaction is (S)-4-hydroxy-2-oxopentanoate = acetaldehyde + pyruvate. The protein is 4-hydroxy-2-oxovalerate aldolase 2 of Mycobacterium sp. (strain JLS).